Here is a 358-residue protein sequence, read N- to C-terminus: MQGTGHPVRPVLELLLLLLLLAGVGGSTTASTPGPPLFNVSLDVAPERWLPVLRHYDVELVRAAVAQVIGDRVPKWVLALIEKGALKLERLLPPPFTAEIRGMCDFLNLSLADGLLVNLAYEYSAFCTSIVAQDSRGHVYHGRNLDYPYGSILRKLTVDVQFLKNGQIAFTGTTFIGYVGLWTGQSPHKFTVSGDERDRGWWWENLVAALFLRHSPISWLLRTTLSEAESFEAAVYRLAKTPLIADVYYIVGGTNPREGVVITRNRDGPADIWPLDPLKGVWFLVETNYDHWKPAPEEDDRRTPAIKALNATGQAKLSLETLFQVLSVVPVYNNYTIYTTVMSAASPDKYMTRIRNPS.

The N-terminal stretch at 1–26 is a signal peptide; sequence MQGTGHPVRPVLELLLLLLLLAGVGG. Asparagine 39 and asparagine 108 each carry an N-linked (GlcNAc...) asparagine glycan. Residue cysteine 127 is the Nucleophile of the active site. Residues asparagine 310, asparagine 334, and asparagine 356 are each glycosylated (N-linked (GlcNAc...) asparagine).

The protein belongs to the acid ceramidase family. Heterodimer of an alpha and a beta subunit, produced by autocatalytic cleavage. Post-translationally, N-glycosylated. Tunicamycin treatment causes a reduction in specific activity against N-palmitoylethanolamine. In terms of processing, autoproteolytic cleavage at pH 4.5 gives rise to the alpha and beta subunit. Cleavage gives rise to a conformation change that activates the enzyme. The same catalytic Cys residue mediates the autoproteolytic cleavage and subsequent hydrolysis of lipid substrates.

It is found in the lysosome. It localises to the membrane. The enzyme catalyses N-hexadecanoylethanolamine + H2O = ethanolamine + hexadecanoate. It carries out the reaction an N-(long-chain fatty acyl)ethanolamine + H2O = a long-chain fatty acid + ethanolamine. It catalyses the reaction N-dodecanoylethanolamine + H2O = dodecanoate + ethanolamine. The catalysed reaction is N-tetradecanoylethanolamine + H2O = tetradecanoate + ethanolamine. The enzyme catalyses an N-acylsphing-4-enine + H2O = sphing-4-enine + a fatty acid. It carries out the reaction N-hexadecanoylsphing-4-enine + H2O = sphing-4-enine + hexadecanoate. It catalyses the reaction N-dodecanoylsphing-4-enine + H2O = dodecanoate + sphing-4-enine. It participates in lipid metabolism; fatty acid metabolism. In terms of biological role, degrades bioactive fatty acid amides to their corresponding acids, with the following preference: N-palmitoylethanolamine &gt; N-myristoylethanolamine &gt; N-stearoylethanolamine &gt; N-oleoylethanolamine &gt; N-linoleoylethanolamine &gt; N-arachidonoylethanolamine. The chain is N-acylethanolamine-hydrolyzing acid amidase from Oryctolagus cuniculus (Rabbit).